The sequence spans 1372 residues: DNA-directed RNA polymerase subunit beta (1372 aa).

This sequence belongs to the RNA polymerase beta chain family. The RNAP catalytic core consists of 2 alpha, 1 beta, 1 beta' and 1 omega subunit. When a sigma factor is associated with the core the holoenzyme is formed, which can initiate transcription.

It carries out the reaction RNA(n) + a ribonucleoside 5'-triphosphate = RNA(n+1) + diphosphate. DNA-dependent RNA polymerase catalyzes the transcription of DNA into RNA using the four ribonucleoside triphosphates as substrates. This chain is DNA-directed RNA polymerase subunit beta, found in Psychrobacter arcticus (strain DSM 17307 / VKM B-2377 / 273-4).